The sequence spans 486 residues: FAD-dependent oxidoreductase domain-containing protein 1 (486 aa).

A helical transmembrane segment spans residues 66–82; that stretch reads VVIVGGGVLGLSVAYWL.

In terms of assembly, associates with components of the mitochondrial respiratory chain complex I. Requires FAD as cofactor.

The protein localises to the mitochondrion inner membrane. Functionally, required for the assembly of the mitochondrial membrane respiratory chain NADH dehydrogenase (Complex I). Involved in mid-late stages of complex I assembly. This Bos taurus (Bovine) protein is FAD-dependent oxidoreductase domain-containing protein 1 (FOXRED1).